A 99-amino-acid polypeptide reads, in one-letter code: Aspartyl/glutamyl-tRNA(Asn/Gln) amidotransferase subunit C (99 aa).

This sequence belongs to the GatC family. As to quaternary structure, heterotrimer of A, B and C subunits.

The catalysed reaction is L-glutamyl-tRNA(Gln) + L-glutamine + ATP + H2O = L-glutaminyl-tRNA(Gln) + L-glutamate + ADP + phosphate + H(+). The enzyme catalyses L-aspartyl-tRNA(Asn) + L-glutamine + ATP + H2O = L-asparaginyl-tRNA(Asn) + L-glutamate + ADP + phosphate + 2 H(+). Its function is as follows. Allows the formation of correctly charged Asn-tRNA(Asn) or Gln-tRNA(Gln) through the transamidation of misacylated Asp-tRNA(Asn) or Glu-tRNA(Gln) in organisms which lack either or both of asparaginyl-tRNA or glutaminyl-tRNA synthetases. The reaction takes place in the presence of glutamine and ATP through an activated phospho-Asp-tRNA(Asn) or phospho-Glu-tRNA(Gln). This is Aspartyl/glutamyl-tRNA(Asn/Gln) amidotransferase subunit C from Sulfurihydrogenibium sp. (strain YO3AOP1).